Consider the following 295-residue polypeptide: Phosphatidylserine decarboxylase proenzyme (295 aa).

Active-site charge relay system; for autoendoproteolytic cleavage activity residues include Asp113, His169, and Ser256. Ser256 acts as the Schiff-base intermediate with substrate; via pyruvic acid; for decarboxylase activity in catalysis. Residue Ser256 is modified to Pyruvic acid (Ser); by autocatalysis.

It belongs to the phosphatidylserine decarboxylase family. PSD-B subfamily. Prokaryotic type II sub-subfamily. Heterodimer of a large membrane-associated beta subunit and a small pyruvoyl-containing alpha subunit. Pyruvate serves as cofactor. In terms of processing, is synthesized initially as an inactive proenzyme. Formation of the active enzyme involves a self-maturation process in which the active site pyruvoyl group is generated from an internal serine residue via an autocatalytic post-translational modification. Two non-identical subunits are generated from the proenzyme in this reaction, and the pyruvate is formed at the N-terminus of the alpha chain, which is derived from the carboxyl end of the proenzyme. The autoendoproteolytic cleavage occurs by a canonical serine protease mechanism, in which the side chain hydroxyl group of the serine supplies its oxygen atom to form the C-terminus of the beta chain, while the remainder of the serine residue undergoes an oxidative deamination to produce ammonia and the pyruvoyl prosthetic group on the alpha chain. During this reaction, the Ser that is part of the protease active site of the proenzyme becomes the pyruvoyl prosthetic group, which constitutes an essential element of the active site of the mature decarboxylase.

The protein localises to the cell membrane. It catalyses the reaction a 1,2-diacyl-sn-glycero-3-phospho-L-serine + H(+) = a 1,2-diacyl-sn-glycero-3-phosphoethanolamine + CO2. It participates in phospholipid metabolism; phosphatidylethanolamine biosynthesis; phosphatidylethanolamine from CDP-diacylglycerol: step 2/2. Functionally, catalyzes the formation of phosphatidylethanolamine (PtdEtn) from phosphatidylserine (PtdSer). This chain is Phosphatidylserine decarboxylase proenzyme, found in Clostridium botulinum (strain ATCC 19397 / Type A).